The primary structure comprises 89 residues: Elongation factor 1-beta (89 aa).

This sequence belongs to the EF-1-beta/EF-1-delta family.

Its function is as follows. Promotes the exchange of GDP for GTP in EF-1-alpha/GDP, thus allowing the regeneration of EF-1-alpha/GTP that could then be used to form the ternary complex EF-1-alpha/GTP/AAtRNA. The chain is Elongation factor 1-beta (ef1b) from Methanothermobacter thermautotrophicus (strain ATCC 29096 / DSM 1053 / JCM 10044 / NBRC 100330 / Delta H) (Methanobacterium thermoautotrophicum).